Here is a 690-residue protein sequence, read N- to C-terminus: Beta-galactosidase (690 aa).

A substrate-binding site is contributed by Asn173. Glu174 functions as the Proton donor in the catalytic mechanism. Substrate is bound at residue Trp345.

It belongs to the glycosyl hydrolase 42 family.

The catalysed reaction is Hydrolysis of terminal non-reducing beta-D-galactose residues in beta-D-galactosides.. Its activity is regulated as follows. Activity stimulated by beta-mercaptoethanol. In terms of biological role, highly specific towards beta-D-galactoside substrates. Hydrolyzes 5-bromo-4-chloro-3-indolyl-beta-D-galactopyranoside (X-Gal) and o-nitrophenyl-beta-D-galactopyranoside (ONPG). Has activity against p-nitrophenyl(pNP)-beta-D-galactoside, but not significantly at all towards pNP-alpha-D-galactoside, pNP-beta-D-glucoside, pNP-beta-D-mannoside, pNP-beta-L-fucoside, pNP-beta-D-xyloside, pNP-beta-L-arabinoside, pNP-beta-D-galuronide, pNP-beta-D-glucuronide, pNP-beta-D-lactoside or pNP-beta-D-cellobioside. The chain is Beta-galactosidase from Arthrobacter sp.